Reading from the N-terminus, the 123-residue chain is Large ribosomal subunit protein bL12 (123 aa).

This sequence belongs to the bacterial ribosomal protein bL12 family. In terms of assembly, homodimer. Part of the ribosomal stalk of the 50S ribosomal subunit. Forms a multimeric L10(L12)X complex, where L10 forms an elongated spine to which 2 to 4 L12 dimers bind in a sequential fashion. Binds GTP-bound translation factors.

Forms part of the ribosomal stalk which helps the ribosome interact with GTP-bound translation factors. Is thus essential for accurate translation. The sequence is that of Large ribosomal subunit protein bL12 from Shewanella sp. (strain ANA-3).